Reading from the N-terminus, the 222-residue chain is Glutathione S-transferase A4 (222 aa).

Methionine 1 is subject to N-acetylmethionine. In terms of domain architecture, GST N-terminal spans 3-83 (ARPKLHYPNG…YIADKHNLFG (81 aa)). Residues tyrosine 9, 54–55 (QV), and 67–68 (QT) contribute to the glutathione site. A GST C-terminal domain is found at 85-208 (NLKERTLIDM…EPGSKKKPPP (124 aa)). Residue tyrosine 212 participates in substrate binding.

It belongs to the GST superfamily. Alpha family. Homodimer. Expressed at a high level in brain, placenta, and skeletal muscle and much lower in lung and liver.

It localises to the cytoplasm. It carries out the reaction RX + glutathione = an S-substituted glutathione + a halide anion + H(+). Conjugation of reduced glutathione to a wide number of exogenous and endogenous hydrophobic electrophiles. This isozyme has a high catalytic efficiency with 4-hydroxyalkenals such as 4-hydroxynonenal (4-HNE). This Homo sapiens (Human) protein is Glutathione S-transferase A4 (GSTA4).